The primary structure comprises 343 residues: tRNA N6-adenosine threonylcarbamoyltransferase (343 aa).

Residues His-120 and His-124 each contribute to the Fe cation site. Substrate-binding positions include 142–146, Asp-175, Gly-188, Asp-192, and Asn-281; that span reads VVSGG. Asp-310 contributes to the Fe cation binding site.

This sequence belongs to the KAE1 / TsaD family. Fe(2+) is required as a cofactor.

It localises to the cytoplasm. It carries out the reaction L-threonylcarbamoyladenylate + adenosine(37) in tRNA = N(6)-L-threonylcarbamoyladenosine(37) in tRNA + AMP + H(+). In terms of biological role, required for the formation of a threonylcarbamoyl group on adenosine at position 37 (t(6)A37) in tRNAs that read codons beginning with adenine. Is involved in the transfer of the threonylcarbamoyl moiety of threonylcarbamoyl-AMP (TC-AMP) to the N6 group of A37, together with TsaE and TsaB. TsaD likely plays a direct catalytic role in this reaction. The protein is tRNA N6-adenosine threonylcarbamoyltransferase of Bacillus cereus (strain ATCC 10987 / NRS 248).